Here is a 1371-residue protein sequence, read N- to C-terminus: F-actin-uncapping protein LRRC16A (1371 aa).

The residue at position 1 (M1) is an N-acetylmethionine. At S122 the chain carries Phosphoserine. 10 LRR repeats span residues 245–269 (SNRLEELVLENAGLRTDFAQKLASA), 275–298 (NSGLHTINLAGNPLEDRGVSSLSI), 304–327 (PKGLKHLNLSKTSLSPKGVNSLSQ), 336–363 (ASTLVHLDLSGNVLRGDDLSHMYNFLAQ), 391–418 (LQYLAVLNLSRTVFSHRKGKEVPPSFKQ), 423–447 (SLALMHINLSGTKLSPEPLKALLLG), 481–506 (IHNITSLDISDNGLESDLSTLIVWLS), 543–566 (ESPLQSLSLADSKLKTEVTIIINA), 570–593 (NTSLTKVDISGNGMGDMGAKMLAK), and 654–678 (LQKIENYLLRNHETRKYLQEQAYRL). A coiled-coil region spans residues 710–734 (GDAIQEDLKSAERLMRDAKNSKTLL). T916 carries the phosphothreonine modification. Disordered regions lie at residues 957–1000 (PFPS…QPTQ), 1036–1159 (KMDS…RRYG), and 1172–1371 (KAKQ…FIFV). One copy of the LRR 11 repeat lies at 958-981 (FPSLRQEKRSSGFISELPSEEGKK). Residues 958–1082 (FPSLRQEKRS…LIKSRSKSER (125 aa)) are inhibits capping activity of CAPZA2. S968 is modified (phosphoserine). 2 stretches are compositionally biased toward basic and acidic residues: residues 977–986 (EEGKKLEHFT) and 1036–1061 (KMDSKKWSTRGSESHELNEGGDEKKK). The tract at residues 1055–1089 (GGDEKKKRDSRKSSGFLNLIKSRSKSERPPTILMT) is necessary for localization at the cell membrane. Residues S1067 and S1094 each carry the phosphoserine modification. Composition is skewed to basic and acidic residues over residues 1106-1130 (CPRKDTKAAEHNGNSERIEEIKTPD) and 1139-1148 (EIGKVERSDS). Over residues 1190–1199 (AVSQDSSSPA) the composition is skewed to polar residues. T1228 bears the Phosphothreonine mark. Basic and acidic residues predominate over residues 1231 to 1243 (KNTKAEPKAEAGS). Positions 1244-1265 (RSRSSSSTPTSPKPLLQSPKPS) are enriched in low complexity. Phosphoserine occurs at positions 1280, 1288, 1291, 1315, 1324, and 1331. Residues 1313–1326 (QSSPQPSPRTFSQE) are compositionally biased toward polar residues. The segment covering 1340 to 1353 (QEQKQRSSSKDGHQ) has biased composition (basic and acidic residues). Phosphoserine is present on S1360.

This sequence belongs to the CARMIL family. As to quaternary structure, homodimer. Interacts (via C-terminus) with heterodimer capping protein (CP); this interaction uncaps barbed ends capped by CP, enhances barbed-end actin polymerization and promotes lamellipodial formation and cell migration. Interacts with heterodimer capping protein (CP). Interacts with MYO1E. Interacts with TRIO. Expressed in lung, placenta, small intestine, liver, thymus, colon, skeletal muscle, heart and brain. Higher expression in kidney.

The protein resides in the cytoplasm. Its subcellular location is the cytoskeleton. The protein localises to the cell membrane. It is found in the cell projection. It localises to the lamellipodium. In terms of biological role, cell membrane-cytoskeleton-associated protein that plays a role in the regulation of actin polymerization at the barbed end of actin filaments. Prevents F-actin heterodimeric capping protein (CP) activity at the leading edges of migrating cells, and hence generates uncapped barbed ends and enhances actin polymerization, however, seems unable to nucleate filaments. Plays a role in lamellipodial protrusion formations and cell migration. This Homo sapiens (Human) protein is F-actin-uncapping protein LRRC16A.